Consider the following 1323-residue polypeptide: Receptor tyrosine-protein kinase let-23 (1323 aa).

The N-terminal stretch at 1–20 (MRYPPSIGSILLIIPIFLTF) is a signal peptide. The Extracellular segment spans residues 21–818 (FGNSNAQLWK…DIASRQRKTR (798 aa)). 2 N-linked (GlcNAc...) asparagine glycosylation sites follow: N91 and N169. 11 disulfides stabilise this stretch: C220–C228, C224–C236, C244–C251, C248–C262, C263–C271, C267–C279, C282–C291, C295–C322, C326–C337, C341–C356, and C359–C364. A glycan (N-linked (GlcNAc...) asparagine) is linked at N255. Residue N376 is glycosylated (N-linked (GlcNAc...) asparagine). Cystine bridges form between C520/C529, C524/C537, C540/C549, C553/C567, C570/C577, C574/C585, C588/C604, C608/C620, C623/C632, C627/C644, C647/C660, C670/C693, C696/C703, C700/C715, C717/C731, C735/C750, C753/C763, C757/C771, C774/C787, and C791/C805. A glycan (N-linked (GlcNAc...) asparagine) is linked at N561. Residue N655 is glycosylated (N-linked (GlcNAc...) asparagine). Residue N746 is glycosylated (N-linked (GlcNAc...) asparagine). N776 carries an N-linked (GlcNAc...) asparagine glycan. The helical transmembrane segment at 819–839 (MVIIGSVLFGFAVMFLFILLV) threads the bilayer. Over 840–1323 (YWRCQRIGKK…EEVSQKETCL (484 aa)) the chain is Cytoplasmic. The Protein kinase domain maps to 885–1152 (TKLDKKLGAG…EFCKVPQLFL (268 aa)). Residues 891-899 (LGAGAFGTV) and K919 contribute to the ATP site. Catalysis depends on D1010, which acts as the Proton acceptor. Positions 1265–1289 (GQTELSPSNGDYYNQPNTPSSSSGY) are enriched in polar residues. The segment at 1265–1323 (GQTELSPSNGDYYNQPNTPSSSSGYYNEPHLKTKKPETSEEAEAVQYENEEVSQKETCL) is disordered. Basic and acidic residues predominate over residues 1293–1302 (PHLKTKKPET). Acidic residues predominate over residues 1303-1315 (SEEAEAVQYENEE).

The protein belongs to the protein kinase superfamily. Tyr protein kinase family. EGF receptor subfamily. In terms of tissue distribution, expressed in vulval precursor cells (at protein level). Expressed in ALA neurons, 2 ventral head neurons, a single neuron in the tail, pharyngeal-intestinal valve and posterior arcade epithelial cells.

Its subcellular location is the apical cell membrane. The protein resides in the basolateral cell membrane. The enzyme catalyses L-tyrosyl-[protein] + ATP = O-phospho-L-tyrosyl-[protein] + ADP + H(+). Functionally, tyrosine-protein kinase receptor which, upon binding ligand lin-3, activates 2 signaling cascades: the let-60/Ras and MAP kinase signaling pathway and the let-60-independent phospholipase C-mediated Ca(2+) signaling pathway. Each pathway regulates distinct functions. By activating let-60/Ras, regulates larval development, induction of vulva cell precursors during vulva development, male spicule formation and posterior development of the epidermis. Probably by activating phospholipase plc-3 and inositol 1,4,5-trisphosphate receptor itr-1 signaling cascade downstream of ligand lin-3, plays a role in ovulation by promoting ovulatory gonadal sheath cell contractions. Probably by regulating neuronal transmission in ALA neurons, mediates, independently of let-60/Ras, the decrease in pharyngeal pumping and locomotion during the quiescent state that precedes each larval molt, downstream of lin-3 and upstream of plc-3. The protein is Receptor tyrosine-protein kinase let-23 of Caenorhabditis elegans.